We begin with the raw amino-acid sequence, 303 residues long: Succinate--CoA ligase [ADP-forming] subunit alpha (303 aa).

Residues 20 to 23, Lys46, and 108 to 110 contribute to the CoA site; these read TGSE and ITE. Position 173 (Tyr173) interacts with substrate. His259 acts as the Tele-phosphohistidine intermediate in catalysis.

It belongs to the succinate/malate CoA ligase alpha subunit family. Heterotetramer of two alpha and two beta subunits.

It carries out the reaction succinate + ATP + CoA = succinyl-CoA + ADP + phosphate. The enzyme catalyses GTP + succinate + CoA = succinyl-CoA + GDP + phosphate. It participates in carbohydrate metabolism; tricarboxylic acid cycle; succinate from succinyl-CoA (ligase route): step 1/1. Succinyl-CoA synthetase functions in the citric acid cycle (TCA), coupling the hydrolysis of succinyl-CoA to the synthesis of either ATP or GTP and thus represents the only step of substrate-level phosphorylation in the TCA. The alpha subunit of the enzyme binds the substrates coenzyme A and phosphate, while succinate binding and nucleotide specificity is provided by the beta subunit. The polypeptide is Succinate--CoA ligase [ADP-forming] subunit alpha (Mycobacterium tuberculosis (strain CDC 1551 / Oshkosh)).